A 238-amino-acid chain; its full sequence is MNSNASNTPIAIGISQIFPCSYLDGQQEQLLVIQEETLDPILFDRLLAIGFRRSGSAIYKPRCPRCSACQPIRLPINEFMPSKRQKRTLAHNRDLTWRMTSEHTEAQYALYEKYIRERHFDGPMFPPSKSQYEQFLFCHWLPPTFIEVYDGNRLLAVAVTDTLPNSLSAIYSYFDPDEERRSLGSLLILLQCRLAKLQDKEFLYLGYQIDANRKMSYKRLYRPYQILTPQGWEYSQVC.

This sequence belongs to the R-transferase family. Bpt subfamily.

It localises to the cytoplasm. The catalysed reaction is N-terminal L-glutamyl-[protein] + L-leucyl-tRNA(Leu) = N-terminal L-leucyl-L-glutamyl-[protein] + tRNA(Leu) + H(+). It carries out the reaction N-terminal L-aspartyl-[protein] + L-leucyl-tRNA(Leu) = N-terminal L-leucyl-L-aspartyl-[protein] + tRNA(Leu) + H(+). Functionally, functions in the N-end rule pathway of protein degradation where it conjugates Leu from its aminoacyl-tRNA to the N-termini of proteins containing an N-terminal aspartate or glutamate. This Shewanella sp. (strain ANA-3) protein is Aspartate/glutamate leucyltransferase.